The following is a 394-amino-acid chain: Argininosuccinate synthase (394 aa).

Residue 8–16 coordinates ATP; it reads AYSGGLDTS. Residues Y86 and S91 each contribute to the L-citrulline site. G116 contacts ATP. Residues T118, N122, and D123 each contribute to the L-aspartate site. N122 lines the L-citrulline pocket. Residues R126, S172, S181, E257, and Y269 each coordinate L-citrulline.

This sequence belongs to the argininosuccinate synthase family. Type 1 subfamily. In terms of assembly, homotetramer.

It localises to the cytoplasm. It catalyses the reaction L-citrulline + L-aspartate + ATP = 2-(N(omega)-L-arginino)succinate + AMP + diphosphate + H(+). The protein operates within amino-acid biosynthesis; L-arginine biosynthesis; L-arginine from L-ornithine and carbamoyl phosphate: step 2/3. This Methanosarcina mazei (strain ATCC BAA-159 / DSM 3647 / Goe1 / Go1 / JCM 11833 / OCM 88) (Methanosarcina frisia) protein is Argininosuccinate synthase.